The primary structure comprises 411 residues: Arginine deiminase (411 aa).

The Amidino-cysteine intermediate role is filled by cysteine 399.

The protein belongs to the arginine deiminase family.

It is found in the cytoplasm. The catalysed reaction is L-arginine + H2O = L-citrulline + NH4(+). Its pathway is amino-acid degradation; L-arginine degradation via ADI pathway; carbamoyl phosphate from L-arginine: step 1/2. This is Arginine deiminase from Latilactobacillus sakei subsp. sakei (strain 23K) (Lactobacillus sakei subsp. sakei).